Here is a 421-residue protein sequence, read N- to C-terminus: Testin (421 aa).

The region spanning 92–199 is the PET domain; it reads MILTNPVAAK…GDVKLPCEMD (108 aa). Positions 133–164 are disordered; sequence EKQPVAGSEGAQYRKKQLAKQLPAHDQDPSKC. Over residues 155 to 164 the composition is skewed to basic and acidic residues; it reads PAHDQDPSKC. LIM zinc-binding domains are found at residues 234-297, 299-359, and 362-421; these read YSCY…CDSE, PRCA…NHAV, and QGCH…KMMS.

Belongs to the prickle / espinas / testin family. Interacts via LIM domain 1 with ZYX. Interacts (via LIM domain 3) with ENAH and VASP. Interacts with ALKBH4, talin, actin, alpha-actinin, GRIP1 and PXN. Interacts (via LIM domain 2) with ACTL7A (via N-terminus). Heterodimer with ACTL7A; the heterodimer interacts with ENAH to form a heterotrimer.

It localises to the cytoplasm. Its subcellular location is the cell junction. The protein localises to the focal adhesion. Functionally, scaffold protein that may play a role in cell adhesion, cell spreading and in the reorganization of the actin cytoskeleton. Plays a role in the regulation of cell proliferation. May act as a tumor suppressor. This Callithrix jacchus (White-tufted-ear marmoset) protein is Testin (TES).